We begin with the raw amino-acid sequence, 459 residues long: UDP-N-acetylmuramoylalanine--D-glutamate ligase (459 aa).

118–124 (GTNGKTT) is a binding site for ATP.

It belongs to the MurCDEF family.

Its subcellular location is the cytoplasm. The catalysed reaction is UDP-N-acetyl-alpha-D-muramoyl-L-alanine + D-glutamate + ATP = UDP-N-acetyl-alpha-D-muramoyl-L-alanyl-D-glutamate + ADP + phosphate + H(+). It functions in the pathway cell wall biogenesis; peptidoglycan biosynthesis. In terms of biological role, cell wall formation. Catalyzes the addition of glutamate to the nucleotide precursor UDP-N-acetylmuramoyl-L-alanine (UMA). In Desulfosudis oleivorans (strain DSM 6200 / JCM 39069 / Hxd3) (Desulfococcus oleovorans), this protein is UDP-N-acetylmuramoylalanine--D-glutamate ligase.